The primary structure comprises 480 residues: uncharacterized protein (480 aa).

Residues 1–21 (MSRYFSFFFLALFLHYRIIVA) form the signal peptide. Disordered stretches follow at residues 38–72 (SSHL…SAEC) and 116–147 (SPLI…NDQT). Residues 51 to 60 (LTQSHSSLSD) are compositionally biased toward low complexity. A compositionally biased stretch (polar residues) spans 133–144 (LKTSSEAQGDTN). Residues 153-173 (YAVEIACVCFLIALAINYFVG) traverse the membrane as a helical segment. The interval 404 to 480 (QARNKTESGR…VPKMKMSRSH (77 aa)) is disordered. Positions 407–465 (NKTESGRQKAAEEAYKELHNARQEALQKKKAEKKKMMEEAEAKMSAEVIRKKEAKERAR) are enriched in basic and acidic residues. Positions 411-467 (SGRQKAAEEAYKELHNARQEALQKKKAEKKKMMEEAEAKMSAEVIRKKEAKERARQV) form a coiled coil. Residues 466-480 (QVKKAVPKMKMSRSH) are compositionally biased toward basic residues.

It localises to the membrane. This is an uncharacterized protein from Arabidopsis thaliana (Mouse-ear cress).